The primary structure comprises 161 residues: Large ribosomal subunit protein eL21 (161 aa).

Belongs to the eukaryotic ribosomal protein eL21 family.

This is Large ribosomal subunit protein eL21 (RPL21) from Cyanophora paradoxa.